The primary structure comprises 231 residues: 26S proteasome non-ATPase regulatory subunit 10 (231 aa).

ANK repeat units follow at residues 3–36, 37–69, 70–102, 103–135, 136–168, 169–201, and 202–226; these read GCVS…ATRT, DQDS…VNDK, DDAG…VNAV, NQNG…PDAK, DHYD…TNIQ, DTEG…IYIE, and NKEE…LAES.

As to quaternary structure, part of transient complex containing PSMD10, PSMC4, PSMC5 and PAAF1 formed during the assembly of the 26S proteasome. Stays associated throughout the assembly of the PA700/19S RC and is released upon association with the 20S core. Interacts with PSMC4. Interacts with RB1. Interacts with CDK4. Interacts with MDM2. Interacts with RELA. Associates with a CDK4:CCND2 serine/threonine kinase complex. Interacts with ARHGDIA and increases the interaction between ARHGDIA and RHOA, hence promotes ARHGDIA inactivation of RHOA and ROCK.

The protein resides in the cytoplasm. It is found in the nucleus. Functionally, acts as a chaperone during the assembly of the 26S proteasome, specifically of the PA700/19S regulatory complex (RC). In the initial step of the base subcomplex assembly is part of an intermediate PSMD10:PSMC4:PSMC5:PAAF1 module which probably assembles with a PSMD5:PSMC2:PSMC1:PSMD2 module. Independently of the proteasome, regulates EGF-induced AKT activation through inhibition of the RHOA/ROCK/PTEN pathway, leading to prolonged AKT activation. Plays an important role in RAS-induced tumorigenesis. Acts as an oncoprotein by being involved in negative regulation of tumor suppressors RB1 and p53/TP53. Overexpression is leading to phosphorylation of RB1 and proteasomal degradation of RB1. Regulates CDK4-mediated phosphorylation of RB1 by competing with CDKN2A for binding with CDK4. Facilitates binding of MDM2 to p53/TP53 and the mono- and polyubiquitination of p53/TP53 by MDM2 suggesting a function in targeting the TP53:MDM2 complex to the 26S proteasome. Involved in p53-independent apoptosis. Involved in regulation of NF-kappa-B by retaining it in the cytoplasm. Binds to the NF-kappa-B component RELA and accelerates its XPO1/CRM1-mediated nuclear export. The chain is 26S proteasome non-ATPase regulatory subunit 10 (Psmd10) from Mus musculus (Mouse).